The primary structure comprises 1710 residues: Ankyrin repeat domain-containing protein 26 (1710 aa).

The interval 1-41 (MKKIFSKKGESPLGSFARRQRSSAGGGGEPGEGAYSQPGYH) is disordered. Phosphoserine occurs at positions 11 and 15. ANK repeat units follow at residues 45–75 (RDLGKIHKAASAGNVAKVQQILLLRKNGLND), 79–108 (MNRTALHLACANGHPEVVTLLVDRKCQLNV), 112–141 (ENRTALMKAVQCQEEKCATILLEHGADPNL), 145–174 (HGNTALHYAVYNEDISVATKLLLYDANIEA), and 178–207 (DDLTPLLLAVSGKKQQMVEFLIKKKANVNA). Residues 222–274 (KEERIPKHSSQNSNSVDESSEDSLSRLSGKPGVDDSWPTSDDEDLNFDTKNVP) are disordered. Residues serine 241, serine 261, serine 489, and serine 530 each carry the phosphoserine modification. Residues 504-630 (DSVPNKAGGM…EKRTSKESVN (127 aa)) are disordered. Positions 529–566 (ASEEEQEREGSENNQPQVEEERKKHRNNEMEVSANIHD) form a coiled coil. Acidic residues predominate over residues 569–580 (TDDAEDDDDDDG). 2 stretches are compositionally biased toward basic and acidic residues: residues 586–602 (KSGETDHQQFPRKENKE) and 613–626 (KEVKSTEKEKRTSK). Phosphoserine is present on serine 631. Over residues 650–660 (DSSLSEIDEDE) the composition is skewed to acidic residues. The segment at 650–698 (DSSLSEIDEDEGRPTKKTSNEKNKVKNQIQSMDDVDDLTQSSETASEDC) is disordered. Residues 661 to 673 (GRPTKKTSNEKNK) are compositionally biased toward basic and acidic residues. Coiled-coil stretches lie at residues 743 to 873 (KNHC…NARM), 905 to 1472 (EEEK…MVEL), 1517 to 1587 (NNFA…NTKL), and 1649 to 1674 (LSKMQQELEKNITRELKEAAAELESG). Positions 892 to 912 (AQKKMNSENSHSHEEEKDLSH) are disordered.

Interacts with TRIO. Interacts with GPS2. Interacts with CCDC85B. Interacts with HMMR.

Its function is as follows. Acts as a regulator of adipogenesis. Involved in the regulation of the feeding behavior. This chain is Ankyrin repeat domain-containing protein 26, found in Homo sapiens (Human).